The primary structure comprises 674 residues: Translation factor GUF1, mitochondrial (674 aa).

Residues 1–33 constitute a mitochondrion transit peptide; sequence MLRPWFCFRSCVSLLSNRRQYGFRYLATAEPSK. A disordered region spans residues 32-51; that stretch reads SKSEKPAKPVKPAKPMSVQE. The region spanning 75 to 257 is the tr-type G domain; the sequence is QNYRNFSIVA…SIIKNIPAPV (183 aa). GTP is bound by residues 84–91, 150–154, and 204–207; these read AHVDHGKS, DTPGH, and NKID.

It belongs to the TRAFAC class translation factor GTPase superfamily. Classic translation factor GTPase family. LepA subfamily.

Its subcellular location is the mitochondrion inner membrane. The enzyme catalyses GTP + H2O = GDP + phosphate + H(+). Promotes mitochondrial protein synthesis. May act as a fidelity factor of the translation reaction, by catalyzing a one-codon backward translocation of tRNAs on improperly translocated ribosomes. Binds to mitochondrial ribosomes in a GTP-dependent manner. This is Translation factor GUF1, mitochondrial from Lodderomyces elongisporus (strain ATCC 11503 / CBS 2605 / JCM 1781 / NBRC 1676 / NRRL YB-4239) (Yeast).